Here is a 77-residue protein sequence, read N- to C-terminus: uncharacterized protein (77 aa).

This is an uncharacterized protein from Escherichia coli (strain K12).